The chain runs to 278 residues: Secoisolariciresinol dehydrogenase (278 aa).

Residues glycine 23–isoleucine 28, aspartate 47, valine 73, and asparagine 99 contribute to the NAD(+) site. Substrate contacts are provided by serine 104 and serine 164. The active-site Proton donor/acceptor is tyrosine 167. NAD(+)-binding residues include lysine 171 and valine 200.

This sequence belongs to the short-chain dehydrogenases/reductases (SDR) family. Homotetramer.

It catalyses the reaction (-)-secoisolariciresinol + 2 NAD(+) = (-)-matairesinol + 2 NADH + 2 H(+). Oxidoreductase involved in lignan biosynthesis. Catalyzes the stereospecific conversion of (-)-secoisolariciresinol to (-)-matairesinol via a lactol intermediate. This chain is Secoisolariciresinol dehydrogenase, found in Podophyllum peltatum (American mandrake).